The primary structure comprises 156 residues: uncharacterized protein (156 aa).

This is an uncharacterized protein from Schizosaccharomyces pombe (strain 972 / ATCC 24843) (Fission yeast).